The following is a 177-amino-acid chain: Coatomer subunit zeta-3 (177 aa).

The protein belongs to the adaptor complexes small subunit family. In terms of assembly, oligomeric complex that consists of at least the alpha, beta, beta', gamma, delta, epsilon and zeta subunits.

Its subcellular location is the cytoplasm. The protein resides in the golgi apparatus membrane. It localises to the cytoplasmic vesicle. The protein localises to the COPI-coated vesicle membrane. In terms of biological role, the coatomer is a cytosolic protein complex that binds to dilysine motifs and reversibly associates with Golgi non-clathrin-coated vesicles, which further mediate biosynthetic protein transport from the ER, via the Golgi up to the trans Golgi network. Coatomer complex is required for budding from Golgi membranes, and is essential for the retrograde Golgi-to-ER transport of dilysine-tagged proteins. The zeta subunit may be involved in regulating the coat assembly and, hence, the rate of biosynthetic protein transport due to its association-dissociation properties with the coatomer complex. The polypeptide is Coatomer subunit zeta-3 (Oryza sativa subsp. japonica (Rice)).